A 388-amino-acid chain; its full sequence is Chaperone protein DnaJ (388 aa).

The 66-residue stretch at 6–71 (DYYEILGVPR…EKRKLYDQFG (66 aa)) folds into the J domain. A CR-type zinc finger spans residues 147–229 (GCEKEIPIYR…CGGTGNVRRQ (83 aa)). Zn(2+) is bound by residues Cys160, Cys163, Cys177, Cys180, Cys203, Cys206, Cys217, and Cys220. CXXCXGXG motif repeat units follow at residues 160–167 (CSVCGGSG), 177–184 (CQKCGGTG), 203–210 (CDACGGTG), and 217–224 (CRECGGTG).

The protein belongs to the DnaJ family. In terms of assembly, homodimer. Zn(2+) serves as cofactor.

The protein localises to the cytoplasm. Participates actively in the response to hyperosmotic and heat shock by preventing the aggregation of stress-denatured proteins and by disaggregating proteins, also in an autonomous, DnaK-independent fashion. Unfolded proteins bind initially to DnaJ; upon interaction with the DnaJ-bound protein, DnaK hydrolyzes its bound ATP, resulting in the formation of a stable complex. GrpE releases ADP from DnaK; ATP binding to DnaK triggers the release of the substrate protein, thus completing the reaction cycle. Several rounds of ATP-dependent interactions between DnaJ, DnaK and GrpE are required for fully efficient folding. Also involved, together with DnaK and GrpE, in the DNA replication of plasmids through activation of initiation proteins. The sequence is that of Chaperone protein DnaJ from Caldicellulosiruptor bescii (strain ATCC BAA-1888 / DSM 6725 / KCTC 15123 / Z-1320) (Anaerocellum thermophilum).